The primary structure comprises 600 residues: Proline--tRNA ligase (600 aa).

Belongs to the class-II aminoacyl-tRNA synthetase family. ProS type 1 subfamily. As to quaternary structure, homodimer.

Its subcellular location is the cytoplasm. The enzyme catalyses tRNA(Pro) + L-proline + ATP = L-prolyl-tRNA(Pro) + AMP + diphosphate. In terms of biological role, catalyzes the attachment of proline to tRNA(Pro) in a two-step reaction: proline is first activated by ATP to form Pro-AMP and then transferred to the acceptor end of tRNA(Pro). As ProRS can inadvertently accommodate and process non-cognate amino acids such as alanine and cysteine, to avoid such errors it has two additional distinct editing activities against alanine. One activity is designated as 'pretransfer' editing and involves the tRNA(Pro)-independent hydrolysis of activated Ala-AMP. The other activity is designated 'posttransfer' editing and involves deacylation of mischarged Ala-tRNA(Pro). The misacylated Cys-tRNA(Pro) is not edited by ProRS. This Prochlorococcus marinus (strain MIT 9301) protein is Proline--tRNA ligase.